Consider the following 420-residue polypeptide: Probable pectate lyase C (420 aa).

An N-terminal signal peptide occupies residues 1-20 (MKLSAPLLVSLAAFSQAVTA). N-linked (GlcNAc...) asparagine glycans are attached at residues N49, N165, and N202. The active site involves R205. Residues 262–297 (NANFHGYVDNNYYDPDKDGQLDGSELGVSSSNYGGM) enclose the EF-hand domain. Ca(2+) is bound by residues D275, D277, D279, Q281, and E286. A disordered region spans residues 357–395 (ATMGGPGTLNGGTPAKDTDGDGIPDEAEKQLGTDPNTND). N-linked (GlcNAc...) asparagine glycosylation is present at N394.

Belongs to the polysaccharide lyase 1 family. Requires Ca(2+) as cofactor.

It localises to the secreted. It catalyses the reaction Eliminative cleavage of (1-&gt;4)-alpha-D-galacturonan to give oligosaccharides with 4-deoxy-alpha-D-galact-4-enuronosyl groups at their non-reducing ends.. In terms of biological role, pectinolytic enzyme consist of four classes of enzymes: pectin lyase, polygalacturonase, pectin methylesterase and rhamnogalacturonase. Among pectinolytic enzymes, pectin lyase is the most important in depolymerization of pectin, since it cleaves internal glycosidic bonds of highly methylated pectins. Favors pectate, the anion, over pectin, the methyl ester. This chain is Probable pectate lyase C (plyC), found in Neosartorya fischeri (strain ATCC 1020 / DSM 3700 / CBS 544.65 / FGSC A1164 / JCM 1740 / NRRL 181 / WB 181) (Aspergillus fischerianus).